The following is a 144-amino-acid chain: SsrA-binding protein (144 aa).

This sequence belongs to the SmpB family.

The protein resides in the cytoplasm. Required for rescue of stalled ribosomes mediated by trans-translation. Binds to transfer-messenger RNA (tmRNA), required for stable association of tmRNA with ribosomes. tmRNA and SmpB together mimic tRNA shape, replacing the anticodon stem-loop with SmpB. tmRNA is encoded by the ssrA gene; the 2 termini fold to resemble tRNA(Ala) and it encodes a 'tag peptide', a short internal open reading frame. During trans-translation Ala-aminoacylated tmRNA acts like a tRNA, entering the A-site of stalled ribosomes, displacing the stalled mRNA. The ribosome then switches to translate the ORF on the tmRNA; the nascent peptide is terminated with the 'tag peptide' encoded by the tmRNA and targeted for degradation. The ribosome is freed to recommence translation, which seems to be the essential function of trans-translation. The polypeptide is SsrA-binding protein (Thermus thermophilus (strain ATCC BAA-163 / DSM 7039 / HB27)).